Reading from the N-terminus, the 389-residue chain is WAT1-related protein At1g21890 (389 aa).

10 helical membrane passes run 13–33 (LAMI…MVSL), 40–60 (YVLA…FALF), 73–93 (IFLQ…NLYY), 102–122 (TFAS…AIIF), 142–162 (VITV…VDFI), 191–211 (WIPG…FFIL), 225–245 (LTTL…LVTV), 260–280 (FAAA…QGVV), 287–307 (VFVA…GVVV), and 312–332 (IHLG…TVVW). 2 EamA domains span residues 23 to 150 (AGMY…GALL) and 205 to 331 (WAGF…YTVV). The disordered stretch occupies residues 339–361 (RMTDDDEDCKGLPIKSPVKPVDT).

It belongs to the drug/metabolite transporter (DMT) superfamily. Plant drug/metabolite exporter (P-DME) (TC 2.A.7.4) family.

The protein localises to the membrane. This chain is WAT1-related protein At1g21890, found in Arabidopsis thaliana (Mouse-ear cress).